The primary structure comprises 303 residues: Protoheme IX farnesyltransferase (303 aa).

Transmembrane regions (helical) follow at residues 25–45, 54–74, 118–138, 166–186, 230–250, and 280–300; these read MGLVQGNLIPAFAGAWLAIVM, IPQILLMLVGSTLIMGGACAL, CLFLLNIPSGVLGLIGIVGYV, IGWVAIDGSLSLAAVALFLVV, LVLLLPLPFLLSNLGVTFVVI, and FVYSLNYLVVFFALVVVVSLI.

The protein belongs to the UbiA prenyltransferase family. Protoheme IX farnesyltransferase subfamily. In terms of assembly, interacts with CtaA.

The protein localises to the cell membrane. It catalyses the reaction heme b + (2E,6E)-farnesyl diphosphate + H2O = Fe(II)-heme o + diphosphate. Its pathway is porphyrin-containing compound metabolism; heme O biosynthesis; heme O from protoheme: step 1/1. Converts heme B (protoheme IX) to heme O by substitution of the vinyl group on carbon 2 of heme B porphyrin ring with a hydroxyethyl farnesyl side group. This Staphylococcus epidermidis (strain ATCC 35984 / DSM 28319 / BCRC 17069 / CCUG 31568 / BM 3577 / RP62A) protein is Protoheme IX farnesyltransferase.